The primary structure comprises 340 residues: UDP-3-O-(3-hydroxymyristoyl)glucosamine N-acyltransferase (340 aa).

The active-site Proton acceptor is His-239.

This sequence belongs to the transferase hexapeptide repeat family. LpxD subfamily. As to quaternary structure, homotrimer.

It catalyses the reaction a UDP-3-O-[(3R)-3-hydroxyacyl]-alpha-D-glucosamine + a (3R)-hydroxyacyl-[ACP] = a UDP-2-N,3-O-bis[(3R)-3-hydroxyacyl]-alpha-D-glucosamine + holo-[ACP] + H(+). It carries out the reaction UDP-3-O-[(3R)-3-hydroxytetradecanoyl]-alpha-D-glucosamine + (3R)-hydroxytetradecanoyl-[ACP] = UDP-2-N,3-O-bis[(3R)-3-hydroxytetradecanoyl]-alpha-D-glucosamine + holo-[ACP] + H(+). The protein operates within glycolipid biosynthesis; lipid IV(A) biosynthesis; lipid IV(A) from (3R)-3-hydroxytetradecanoyl-[acyl-carrier-protein] and UDP-N-acetyl-alpha-D-glucosamine: step 3/6. In terms of biological role, catalyzes the N-acylation of UDP-3-O-(hydroxytetradecanoyl)glucosamine using 3-hydroxytetradecanoyl-ACP as the acyl donor. Is involved in the biosynthesis of lipid A, a phosphorylated glycolipid that anchors the lipopolysaccharide to the outer membrane of the cell. In Yersinia pestis bv. Antiqua (strain Antiqua), this protein is UDP-3-O-(3-hydroxymyristoyl)glucosamine N-acyltransferase.